A 333-amino-acid chain; its full sequence is 6-phosphogluconolactonase (333 aa).

Belongs to the cycloisomerase 2 family.

It carries out the reaction 6-phospho-D-glucono-1,5-lactone + H2O = 6-phospho-D-gluconate + H(+). It participates in carbohydrate degradation; pentose phosphate pathway; D-ribulose 5-phosphate from D-glucose 6-phosphate (oxidative stage): step 2/3. Catalyzes the hydrolysis of 6-phosphogluconolactone to 6-phosphogluconate. This is 6-phosphogluconolactonase from Cronobacter sakazakii (strain ATCC BAA-894) (Enterobacter sakazakii).